The following is a 247-amino-acid chain: Capsid protein (247 aa).

Residues 3-20 (KRDAPWRLMAGTSKVSRS) carry the Bipartite nuclear localization signal motif. Positions 31–45 (KRDAWVNRPMYRKPR) match the Nuclear localization signal motif. The Nuclear export signal signature appears at 92-113 (ITHRVGKRFCVKSVYILGKIWM). Residues 191-238 (RRFWKVNNNVVYNHQEAGKYENHTENALLLYMACTHASNPVYATLKIR) carry the Bipartite nuclear localization signal motif.

The protein belongs to the geminiviridae capsid protein family. As to quaternary structure, homomultimer. Binds to single-stranded and double-stranded viral DNA. Interacts (via nuclear localization signals) with host importin alpha-1a.

The protein resides in the virion. It is found in the host nucleus. Functionally, encapsidates the viral DNA into characteristic twinned ('geminate') particles. Binds the genomic viral ssDNA and shuttles it into and out of the cell nucleus. The CP of bipartite geminiviruses is not required for cell-to-cell or systemic movement. The sequence is that of Capsid protein from Solanum lycopersicum (Tomato).